Here is an 88-residue protein sequence, read N- to C-terminus: Small ribosomal subunit protein bS16 (88 aa).

The protein belongs to the bacterial ribosomal protein bS16 family.

This Leptospira interrogans serogroup Icterohaemorrhagiae serovar Lai (strain 56601) protein is Small ribosomal subunit protein bS16.